The chain runs to 398 residues: NADH-quinone oxidoreductase subunit D (398 aa).

The protein belongs to the complex I 49 kDa subunit family. In terms of assembly, NDH-1 is composed of 14 different subunits. Subunits NuoB, C, D, E, F, and G constitute the peripheral sector of the complex.

It localises to the cell inner membrane. The enzyme catalyses a quinone + NADH + 5 H(+)(in) = a quinol + NAD(+) + 4 H(+)(out). Functionally, NDH-1 shuttles electrons from NADH, via FMN and iron-sulfur (Fe-S) centers, to quinones in the respiratory chain. The immediate electron acceptor for the enzyme in this species is believed to be ubiquinone. Couples the redox reaction to proton translocation (for every two electrons transferred, four hydrogen ions are translocated across the cytoplasmic membrane), and thus conserves the redox energy in a proton gradient. This chain is NADH-quinone oxidoreductase subunit D, found in Anaplasma marginale (strain St. Maries).